Consider the following 288-residue polypeptide: Diaminopimelate epimerase (288 aa).

Asn-14 and Asn-67 together coordinate substrate. Cys-76 serves as the catalytic Proton donor. Substrate-binding positions include 77–78 (GN), Asn-166, Asn-199, and 217–218 (ER). The Proton acceptor role is filled by Cys-226. Position 227-228 (227-228 (GT)) interacts with substrate.

Belongs to the diaminopimelate epimerase family. As to quaternary structure, homodimer.

The protein resides in the cytoplasm. The catalysed reaction is (2S,6S)-2,6-diaminopimelate = meso-2,6-diaminopimelate. Its pathway is amino-acid biosynthesis; L-lysine biosynthesis via DAP pathway; DL-2,6-diaminopimelate from LL-2,6-diaminopimelate: step 1/1. In terms of biological role, catalyzes the stereoinversion of LL-2,6-diaminopimelate (L,L-DAP) to meso-diaminopimelate (meso-DAP), a precursor of L-lysine and an essential component of the bacterial peptidoglycan. This Bacillus cereus (strain ATCC 14579 / DSM 31 / CCUG 7414 / JCM 2152 / NBRC 15305 / NCIMB 9373 / NCTC 2599 / NRRL B-3711) protein is Diaminopimelate epimerase.